The following is a 66-amino-acid chain: Ocellatin-PT2 (66 aa).

The N-terminal stretch at 1-22 is a signal peptide; the sequence is MAFLKKSLFLVLFLGLVSLSIC. Positions 23–39 are excised as a propeptide; that stretch reads DEEKRQDEDDDDDDDEE. Val66 carries the valine amide modification.

Expressed by the skin glands.

The protein localises to the secreted. In terms of biological role, has no antibacterial activity against Gram-negative bacteria E.coli ATCC 25922, S.pneumoniae ATCC 700603 and S.choleraesuis ATCC 14028 or against Gram-positive bacterium S.aureus ATCC 29313. Shows no hemolytic activity and no cytotoxicity. The chain is Ocellatin-PT2 from Leptodactylus pustulatus (Ceara white-lipped frog).